The chain runs to 309 residues: DDRGK domain-containing protein 1 (309 aa).

Over 1-2 the chain is Lumenal; that stretch reads MD. Residues 3-23 form a helical membrane-spanning segment; that stretch reads LIILVGIASALLVVILTIFFL. The Cytoplasmic portion of the chain corresponds to 24 to 309; the sequence is QKKKGGTEAK…VSAGAGEGSS (286 aa). The disordered stretch occupies residues 30–178; that stretch reads TEAKEAAAPP…RLVKEERERK (149 aa). Residues 53-84 are compositionally biased toward low complexity; sequence RRAQIARNQRNRLRQNAPAAAPAAAAALQAAD. Residues 85-95 show a composition bias toward acidic residues; it reads AEGDNDDENPD. A compositionally biased stretch (basic and acidic residues) spans 107–178; the sequence is LDEKMGAKKR…RLVKEERERK (72 aa).

The protein belongs to the DDRGK1 family. As to quaternary structure, interacts with Atg9; the interaction is transient.

It localises to the endoplasmic reticulum membrane. Functionally, substrate adapter for ufmylation, the covalent attachment of the ubiquitin-like modifier UFM1 to substrate proteins. Required for ufmylation of Atg9; protects the nervous system during aging, possibly by stabilizing Atg9 and supporting its function. The chain is DDRGK domain-containing protein 1 from Drosophila persimilis (Fruit fly).